The sequence spans 320 residues: Probable protein adenylyltransferase aq_aa38 (320 aa).

One can recognise a Fido domain in the interval 76-206; the sequence is VSEALILWIY…AIVVVEKLSR (131 aa). ATP contacts are provided by residues 100–101, 157–159, and Arg163; these read KS and GNG.

It belongs to the fic family.

The enzyme catalyses L-tyrosyl-[protein] + ATP = O-(5'-adenylyl)-L-tyrosyl-[protein] + diphosphate. The catalysed reaction is L-threonyl-[protein] + ATP = 3-O-(5'-adenylyl)-L-threonyl-[protein] + diphosphate. Its function is as follows. Probable adenylyltransferase that mediates the addition of adenosine 5'-monophosphate (AMP) to specific residues of target proteins. The polypeptide is Probable protein adenylyltransferase aq_aa38 (Aquifex aeolicus (strain VF5)).